Reading from the N-terminus, the 183-residue chain is Apo-citrate lyase phosphoribosyl-dephospho-CoA transferase (183 aa).

It belongs to the CitX family.

It carries out the reaction apo-[citrate lyase ACP] + 2'-(5''-triphospho-alpha-D-ribosyl)-3'-dephospho-CoA = holo-[citrate lyase ACP] + diphosphate. Its function is as follows. Transfers 2-(5''-triphosphoribosyl)-3'-dephosphocoenzyme-A on a serine residue to the apo-acyl carrier protein (gamma chain) of the citrate lyase to yield holo-acyl carrier protein. This Escherichia coli (strain SMS-3-5 / SECEC) protein is Apo-citrate lyase phosphoribosyl-dephospho-CoA transferase.